Here is a 347-residue protein sequence, read N- to C-terminus: LRP2-binding protein (347 aa).

Residues 59–92 (TLAYFLRGQLYFEEGWYEEALEQFEEIKEKDHQA) form a TPR repeat. 6 Sel1-like repeats span residues 93–125 (TYQLGVMYYDGLGTTLDAEKGVDYMKKILDSPC), 133–168 (FAAAYNLGRAYYEGKGVKRSNEEAERLWLIAADNGN), 173–206 (VKAQSMLGLYYSTKEPKELEKAFYWHSEACGNGN), 207–242 (LESQGALGLMYLYGQGIRQDTEAALQCLREAAERGN), 243–277 (VYAQGNLVEYYYKMKFFTKCVAFSKRIADYDEVHD), and 297–332 (AMASFYHARCLQLGLGITRDETTAKHYYSKACRLNP).

In terms of assembly, interacts with LRP2.

It is found in the cytoplasm. Functionally, may act as an adapter that regulates LRP2 function. The sequence is that of LRP2-binding protein (LRP2BP) from Homo sapiens (Human).